The primary structure comprises 602 residues: Aspartate--tRNA(Asp/Asn) ligase (602 aa).

Glu-170 lines the L-aspartate pocket. Residues 194 to 197 (QLFK) are aspartate. L-aspartate is bound at residue Arg-216. ATP-binding positions include 216–218 (RDE) and Gln-225. His-448 provides a ligand contact to L-aspartate. Glu-482 is a binding site for ATP. Residue Arg-489 coordinates L-aspartate. 534-537 (GWDR) serves as a coordination point for ATP. Residues 559-602 (GGVDPLTNAPAPITAQQRKESGVDAKPEPKGDAASAKPDAPADK) form a disordered region. A compositionally biased stretch (basic and acidic residues) spans 575-589 (QRKESGVDAKPEPKG). The segment covering 590–602 (DAASAKPDAPADK) has biased composition (low complexity).

This sequence belongs to the class-II aminoacyl-tRNA synthetase family. Type 1 subfamily. As to quaternary structure, homodimer.

Its subcellular location is the cytoplasm. It catalyses the reaction tRNA(Asx) + L-aspartate + ATP = L-aspartyl-tRNA(Asx) + AMP + diphosphate. Its function is as follows. Aspartyl-tRNA synthetase with relaxed tRNA specificity since it is able to aspartylate not only its cognate tRNA(Asp) but also tRNA(Asn). Reaction proceeds in two steps: L-aspartate is first activated by ATP to form Asp-AMP and then transferred to the acceptor end of tRNA(Asp/Asn). The protein is Aspartate--tRNA(Asp/Asn) ligase of Rhodococcus jostii (strain RHA1).